A 620-amino-acid chain; its full sequence is Translocator protein BipB (620 aa).

Residues 58 to 95 are disordered; that stretch reads QCDAQPAAHDARLDDKPALRAPQERDAPPLGASDTGSR. The segment covering 66–84 has biased composition (basic and acidic residues); sequence HDARLDDKPALRAPQERDA. The stretch at 309-339 forms a coiled coil; it reads EMQAKREAELQKKSDEYQAQVKKAEEMQKTM. 3 helical membrane passes run 355–375, 401–421, and 430–450; these read FAAAAFTGGASLALAAVGLAL, AILKPLMEMISSLITKALVAC, and LAGAILGAVVTGVALVAAAFV.

This sequence belongs to the SctE/SipB/YopB family.

The protein localises to the secreted. Its subcellular location is the host membrane. In terms of biological role, plays a role in the bacterium-induced formation of multinucleated giant cell (MNGC), which is formed after host cell fusion, as well as in the intercellular spreading of bacteria and in the induction of apoptosis in macrophages. May act in concert with other effector proteins to induce fusion of host cell membranes. The polypeptide is Translocator protein BipB (bipB) (Burkholderia pseudomallei (strain 1106a)).